Reading from the N-terminus, the 113-residue chain is Guanylate cyclase activator 2B (113 aa).

A signal peptide spans 1 to 27; sequence MASRAAAGLLLCGVALVFLVLLQGTQS. The propeptide occupies 28–97; that stretch reads VYIQYQGFRV…SIFQALRTIA (70 aa). Intrachain disulfides connect Cys68–Cys81, Cys101–Cys109, and Cys104–Cys112.

The protein belongs to the guanylin family.

Its subcellular location is the secreted. Its function is as follows. Endogenous activator of intestinal guanylate cyclase. It stimulates this enzyme through the same receptor binding region as the heat-stable enterotoxins. May be a potent physiological regulator of intestinal fluid and electrolyte transport. May be an autocrine/paracrine regulator of intestinal salt and water transport. The sequence is that of Guanylate cyclase activator 2B (GUCA2B) from Sus scrofa (Pig).